The chain runs to 87 residues: Small ribosomal subunit protein uS15c (87 aa).

It belongs to the universal ribosomal protein uS15 family. In terms of assembly, part of the 30S ribosomal subunit.

It localises to the plastid. The protein localises to the chloroplast. This chain is Small ribosomal subunit protein uS15c (rps15), found in Atropa belladonna (Belladonna).